A 414-amino-acid polypeptide reads, in one-letter code: ORC1-type DNA replication protein 1 (414 aa).

ATP-binding positions include 70–74 (TGKTA), Y213, and R225.

The protein belongs to the CDC6/cdc18 family.

Functionally, involved in regulation of DNA replication. The protein is ORC1-type DNA replication protein 1 (cdc6-1) of Methanosarcina acetivorans (strain ATCC 35395 / DSM 2834 / JCM 12185 / C2A).